A 278-amino-acid chain; its full sequence is UPF0750 membrane protein YxkD (278 aa).

Transmembrane regions (helical) follow at residues 8–28 (VLML…FAIP), 46–66 (LFQW…LLIG), 77–97 (YTII…GWSI), 101–121 (ELII…GMII), and 145–165 (ISYA…FIIG).

Belongs to the UPF0750 family.

It localises to the cell membrane. This chain is UPF0750 membrane protein YxkD (yxkD), found in Bacillus subtilis (strain 168).